The primary structure comprises 1322 residues: FERM and PDZ domain-containing protein 4 (1322 aa).

Residues 33-66 (QVPPYGWEMTANRDGRDYFINHMTQAIPFDDPRL) enclose the WW domain. The PDZ domain occupies 78-155 (KVEMRRDPVL…SILLTVIQPY (78 aa)). In terms of domain architecture, FERM spans 204–519 (NVLKVYLENG…GYYRLLVDSR (316 aa)). Disordered stretches follow at residues 809-847 (APPP…EIPV), 900-927 (SPES…TAQK), 952-983 (EFPA…PPKV), 1027-1080 (RKSK…STFN), 1105-1148 (SGLE…GQGD), 1160-1180 (AKDL…PSKL), and 1207-1227 (HFSL…TGSS). Residues 902 to 921 (ESSSDSGNETNSSEMTESSE) show a composition bias toward low complexity. Low complexity predominate over residues 1041–1054 (NGNTTGKKQQGTKT). Residues 1067-1080 (TVSSRDSQHLSTFN) are compositionally biased toward polar residues. Polar residues predominate over residues 1207–1217 (HFSLQSSQGSS).

Interacts (via C-terminus) with DLG1, DLG2, DLG3 and DLG4/PSD95. Interacts (via N-terminus) with ARHGEF7; the interaction is mediated by the PDZ domain. Interacts with GPSM2 (via TPR repeat region).

Its subcellular location is the cell projection. It localises to the dendritic spine. Its function is as follows. Positive regulator of dendritic spine morphogenesis and density. Required for the maintenance of excitatory synaptic transmission. Binds phosphatidylinositol 4,5-bisphosphate. This chain is FERM and PDZ domain-containing protein 4 (FRMPD4), found in Homo sapiens (Human).